The chain runs to 647 residues: A-type voltage-gated potassium channel KCND1 (647 aa).

Residues 1 to 183 are Cytoplasmic-facing; it reads MAAGVATWLP…RAFENPHTST (183 aa). Positions 2 to 20 are interaction with KCNIP1, KCNIP2, and other family members; it reads AAGVATWLPFARAAAVGWL. His-104, Cys-131, and Cys-132 together coordinate Zn(2+). The tract at residues 144–164 is disordered; sequence AQRLAEDEEAEQTGDGPALPA. Residues 184-205 form a helical membrane-spanning segment; sequence AALVFYYVTGFFIAVSVIANVV. Residues 206–230 lie on the Extracellular side of the membrane; it reads ETIPCRGPARRPPREQPCGDRFPLA. The helical transmembrane segment at 231 to 252 threads the bilayer; that stretch reads FFCMDTACVLIFTGEYLLRLFA. At 253–263 the chain is on the cytoplasmic side; it reads APSRCRFLRSV. A helical transmembrane segment spans residues 264–284; that stretch reads MSLIDVVAILPYYIGLLVPKN. The Extracellular portion of the chain corresponds to 285-287; it reads EDV. Residues 288–308 form a helical; Voltage-sensor membrane-spanning segment; sequence SGAFVTLRVFRVFRIFKFSRH. The Cytoplasmic portion of the chain corresponds to 309 to 323; it reads SQGLRILGYTLKSCA. Residues 310–323 are S4-S5 linker; sequence QGLRILGYTLKSCA. A helical membrane pass occupies residues 324–345; sequence SELGFLLFSLTMAIIIFATVMF. Topologically, residues 346–359 are extracellular; it reads YAEKGTSKTNFTSI. The helical intramembrane region spans 360-371; it reads PAAFWYTIVTMT. The short motif at 372 to 377 is the Selectivity filter element; that stretch reads TLGYGD. An intramembrane segment occupies 372–379; it reads TLGYGDMV. The Extracellular portion of the chain corresponds to 380–386; it reads PSTIAGK. Residues 387-415 traverse the membrane as a helical segment; it reads IFGSICSLSGVLVIALPVPVIVSNFSRIY. The Cytoplasmic portion of the chain corresponds to 416-647; sequence HQNQRADKRR…LPETVKISSL (232 aa). A required for dendritic targeting region spans residues 474-489; it reads FEQQHHHLLHCLEKTT. The span at 510-520 shows a compositional bias: low complexity; sequence GRTSRSTSVSS. Residues 510–531 are disordered; that stretch reads GRTSRSTSVSSQPVGPSSLLSS. Positions 521–530 are enriched in polar residues; the sequence is QPVGPSSLLS. Residue Ser-555 is modified to Phosphoserine. Disordered stretches follow at residues 564–584 and 601–634; these read GLRR…PHDS and IPTP…RLGT.

The protein belongs to the potassium channel family. D (Shal) (TC 1.A.1.2) subfamily. Kv4.1/KCND1 sub-subfamily. Component of heteromultimeric potassium channels. Identified in potassium channel complexes containing KCND1, KCND2, KCND3, KCNIP1, KCNIP2, KCNIP3, KCNIP4, DPP6 and DPP10. In terms of tissue distribution, detected in carotid body chemoreceptor cells and in frontal cortex.

Its subcellular location is the cell membrane. It catalyses the reaction K(+)(in) = K(+)(out). In terms of biological role, A-type voltage-gated potassium channel that mediates transmembrane potassium transport in excitable membranes in the brain. Mediates A-type current I(SA) in suprachiasmatic nucleus (SCN) neurons. Exhibits a low-threshold A-type current with a hyperpolarized steady-state inactivation midpoint and the recovery process was steeply voltage-dependent, with recovery being markedly faster at more negative potentials. May regulates repetitive firing rates in the suprachiasmatic nucleus (SCN) neurons and circadian rhythms in neuronal excitability and behavior. Contributes to the regulation of the circadian rhythm of action potential firing in suprachiasmatic nucleus neurons, which regulates the circadian rhythm of locomotor activity. The regulatory subunit KCNIP1 modulates the kinetics of channel inactivation, increases the current amplitudes and accelerates recovery from inactivation, shifts activation in a depolarizing direction. The regulatory subunit DPP10 decreases the voltage sensitivity of the inactivation channel gating. The polypeptide is A-type voltage-gated potassium channel KCND1 (Oryctolagus cuniculus (Rabbit)).